We begin with the raw amino-acid sequence, 101 residues long: NAD(P)H-quinone oxidoreductase subunit 4L, chloroplastic (101 aa).

The next 2 helical transmembrane spans lie at methionine 2–isoleucine 22 and isoleucine 61–valine 81.

This sequence belongs to the complex I subunit 4L family. NDH is composed of at least 16 different subunits, 5 of which are encoded in the nucleus.

It is found in the plastid. The protein localises to the chloroplast thylakoid membrane. The catalysed reaction is a plastoquinone + NADH + (n+1) H(+)(in) = a plastoquinol + NAD(+) + n H(+)(out). The enzyme catalyses a plastoquinone + NADPH + (n+1) H(+)(in) = a plastoquinol + NADP(+) + n H(+)(out). In terms of biological role, NDH shuttles electrons from NAD(P)H:plastoquinone, via FMN and iron-sulfur (Fe-S) centers, to quinones in the photosynthetic chain and possibly in a chloroplast respiratory chain. The immediate electron acceptor for the enzyme in this species is believed to be plastoquinone. Couples the redox reaction to proton translocation, and thus conserves the redox energy in a proton gradient. This is NAD(P)H-quinone oxidoreductase subunit 4L, chloroplastic from Dioscorea elephantipes (Elephant's foot yam).